The following is a 414-amino-acid chain: Serine--tRNA ligase (414 aa).

230-232 (TSE) contributes to the L-serine binding site. 261 to 263 (RQE) is a binding site for ATP. Glu-284 lines the L-serine pocket. Position 348–351 (348–351 (EISS)) interacts with ATP. Ser-382 contacts L-serine.

Belongs to the class-II aminoacyl-tRNA synthetase family. Type-1 seryl-tRNA synthetase subfamily. In terms of assembly, homodimer. The tRNA molecule binds across the dimer.

Its subcellular location is the cytoplasm. It carries out the reaction tRNA(Ser) + L-serine + ATP = L-seryl-tRNA(Ser) + AMP + diphosphate + H(+). The catalysed reaction is tRNA(Sec) + L-serine + ATP = L-seryl-tRNA(Sec) + AMP + diphosphate + H(+). The protein operates within aminoacyl-tRNA biosynthesis; selenocysteinyl-tRNA(Sec) biosynthesis; L-seryl-tRNA(Sec) from L-serine and tRNA(Sec): step 1/1. In terms of biological role, catalyzes the attachment of serine to tRNA(Ser). Is also able to aminoacylate tRNA(Sec) with serine, to form the misacylated tRNA L-seryl-tRNA(Sec), which will be further converted into selenocysteinyl-tRNA(Sec). The sequence is that of Serine--tRNA ligase from Campylobacter concisus (strain 13826).